Consider the following 21-residue polypeptide: Maculatin-1.1 (21 aa).

Phe-21 carries the phenylalanine amide modification.

Expressed by the skin dorsal glands.

The protein resides in the secreted. In terms of biological role, maculatin-1.1 shows significant antibacterial activity against Gram-positive bacteria, less against Gram-negative bacteria. Maculatin-1.1.1 is inactive. The polypeptide is Maculatin-1.1 (Ranoidea genimaculata (Brown-spotted tree frog)).